Reading from the N-terminus, the 319-residue chain is HPr kinase/phosphorylase (319 aa).

Residues His-141 and Lys-162 contribute to the active site. 156 to 163 provides a ligand contact to ATP; sequence GNSGVGKS. Ser-163 contacts Mg(2+). Asp-180 (proton acceptor; for phosphorylation activity. Proton donor; for dephosphorylation activity) is an active-site residue. Residues 204–213 form an important for the catalytic mechanism of both phosphorylation and dephosphorylation region; that stretch reads MEIRGIGIID. Glu-205 serves as a coordination point for Mg(2+). Arg-246 is a catalytic residue. Residues 267–272 form an important for the catalytic mechanism of dephosphorylation region; the sequence is PVKVGR.

The protein belongs to the HPrK/P family. Homohexamer. Mg(2+) serves as cofactor.

It catalyses the reaction [HPr protein]-L-serine + ATP = [HPr protein]-O-phospho-L-serine + ADP + H(+). It carries out the reaction [HPr protein]-O-phospho-L-serine + phosphate + H(+) = [HPr protein]-L-serine + diphosphate. Catalyzes the ATP- as well as the pyrophosphate-dependent phosphorylation of a specific serine residue in HPr, a phosphocarrier protein of the phosphoenolpyruvate-dependent sugar phosphotransferase system (PTS). HprK/P also catalyzes the pyrophosphate-producing, inorganic phosphate-dependent dephosphorylation (phosphorolysis) of seryl-phosphorylated HPr (P-Ser-HPr). The two antagonistic activities of HprK/P are regulated by several intracellular metabolites, which change their concentration in response to the absence or presence of rapidly metabolisable carbon sources (glucose, fructose, etc.) in the growth medium. Therefore, by controlling the phosphorylation state of HPr, HPrK/P is a sensor enzyme that plays a major role in the regulation of carbon metabolism and sugar transport: it mediates carbon catabolite repression (CCR), and regulates PTS-catalyzed carbohydrate uptake and inducer exclusion. This chain is HPr kinase/phosphorylase, found in Lactobacillus johnsonii (strain CNCM I-12250 / La1 / NCC 533).